The following is a 589-amino-acid chain: uncharacterized protein (589 aa).

A run of 14 helical transmembrane segments spans residues 90-110 (YIVI…QTVI), 128-148 (SWIG…CGIM), 162-182 (IVLF…LWLV), 189-209 (GIGG…ITPL), 217-237 (GCMG…GGAI), 245-265 (WIFF…IFFL), 284-304 (FVGI…LNIG), 311-331 (AHAN…GFVV), 355-375 (VMVT…YIPI), 390-410 (VHTL…GMGI), 418-438 (YPMI…IAIY), 448-468 (GFLA…LIAI), 483-503 (AFML…AVIY), and 545-565 (IRTI…LSFF).

The protein belongs to the major facilitator superfamily. TCR/Tet family.

It localises to the membrane. This is an uncharacterized protein from Schizosaccharomyces pombe (strain 972 / ATCC 24843) (Fission yeast).